The primary structure comprises 40 residues: Photosystem II reaction center protein J (40 aa).

A helical membrane pass occupies residues 8–28 (IPLWLIGTVTGIIVIGLIGIF).

This sequence belongs to the PsbJ family. In terms of assembly, PSII is composed of 1 copy each of membrane proteins PsbA, PsbB, PsbC, PsbD, PsbE, PsbF, PsbH, PsbI, PsbJ, PsbK, PsbL, PsbM, PsbT, PsbX, PsbY, PsbZ, Psb30/Ycf12, at least 3 peripheral proteins of the oxygen-evolving complex and a large number of cofactors. It forms dimeric complexes.

It is found in the plastid. The protein resides in the chloroplast thylakoid membrane. In terms of biological role, one of the components of the core complex of photosystem II (PSII). PSII is a light-driven water:plastoquinone oxidoreductase that uses light energy to abstract electrons from H(2)O, generating O(2) and a proton gradient subsequently used for ATP formation. It consists of a core antenna complex that captures photons, and an electron transfer chain that converts photonic excitation into a charge separation. The protein is Photosystem II reaction center protein J of Piper cenocladum (Ant piper).